The sequence spans 178 residues: N-alpha-acetyltransferase 80 (178 aa).

The 153-residue stretch at 26–178 folds into the N-acetyltransferase domain; sequence VPIHNYPELM…AKKKYMKKVL (153 aa). Residues Arg-48, 53–56, Asn-88, and Ser-98 contribute to the substrate site; that span reads RMRS. Residues 99–101 and 107–112 contribute to the acetyl-CoA site; these read VVV and GQGFGK. Ser-134 serves as a coordination point for substrate. Gln-138 is an acetyl-CoA binding site.

The protein belongs to the acetyltransferase family.

The catalysed reaction is N-terminal L-aspartyl-L-aspartyl-L-aspartyl-[protein] + acetyl-CoA = N-terminal N-acetyl-L-aspartyl-L-aspartyl-L-aspartyl-[protein] + CoA + H(+). The enzyme catalyses N-terminal L-glutamyl-L-glutamyl-L-glutamyl-[protein] + acetyl-CoA = N-terminal N-acetyl-L-glutamyl-L-glutamyl-L-glutamyl-[protein] + CoA + H(+). N-alpha-acetyltransferase that acetylates the amino terminal acidic residue of proteins devoid of initiator methionine. Preferentially acts on proteins starting with Asp-Asp-Asp and Glu-Glu-Glu sequences. In vitro, shows high activity towards N-terminal sequences starting with Met-Asp-Glu-Leu, Met-Glu-Glu-Glu and Met-Asp-Asp-Asp. This Drosophila melanogaster (Fruit fly) protein is N-alpha-acetyltransferase 80.